We begin with the raw amino-acid sequence, 457 residues long: Multidrug resistance protein MdtK (457 aa).

12 helical membrane-spanning segments follow: residues 11-31, 53-73, 93-113, 127-147, 160-180, 188-208, 243-263, 276-296, 314-334, 350-370, 387-407, and 418-438; these read LLAL…MGFV, IWLP…PVIA, WLAG…GYII, AVGY…FQVA, GMVM…IFIY, LGGI…FIAM, LPIA…ALLV, IALN…AAVT, AART…IFTV, VVAL…SDSI, IFFI…YILA, and PAGF…LMML.

Belongs to the multi antimicrobial extrusion (MATE) (TC 2.A.66.1) family. MdtK subfamily.

Its subcellular location is the cell inner membrane. Its function is as follows. Multidrug efflux pump that functions probably as a Na(+)/drug antiporter. This is Multidrug resistance protein MdtK from Salmonella enteritidis PT4 (strain P125109).